A 313-amino-acid chain; its full sequence is Tagatose-6-phosphate kinase (313 aa).

The protein belongs to the carbohydrate kinase PfkB family. LacC subfamily.

The catalysed reaction is D-tagatofuranose 6-phosphate + ATP = D-tagatofuranose 1,6-bisphosphate + ADP + H(+). Its pathway is carbohydrate metabolism; D-tagatose 6-phosphate degradation; D-glyceraldehyde 3-phosphate and glycerone phosphate from D-tagatose 6-phosphate: step 1/2. The chain is Tagatose-6-phosphate kinase from Enterococcus faecalis (strain ATCC 700802 / V583).